We begin with the raw amino-acid sequence, 246 residues long: PF03932 family protein CutC (246 aa).

It belongs to the CutC family.

It localises to the cytoplasm. In Treponema denticola (strain ATCC 35405 / DSM 14222 / CIP 103919 / JCM 8153 / KCTC 15104), this protein is PF03932 family protein CutC.